The chain runs to 214 residues: Nucleoside triphosphate pyrophosphatase (214 aa).

Catalysis depends on Asp-79, which acts as the Proton acceptor.

This sequence belongs to the Maf family. Requires a divalent metal cation as cofactor.

It is found in the cytoplasm. The enzyme catalyses a ribonucleoside 5'-triphosphate + H2O = a ribonucleoside 5'-phosphate + diphosphate + H(+). The catalysed reaction is a 2'-deoxyribonucleoside 5'-triphosphate + H2O = a 2'-deoxyribonucleoside 5'-phosphate + diphosphate + H(+). Functionally, nucleoside triphosphate pyrophosphatase. May have a dual role in cell division arrest and in preventing the incorporation of modified nucleotides into cellular nucleic acids. This chain is Nucleoside triphosphate pyrophosphatase, found in Rhodococcus opacus (strain B4).